Consider the following 279-residue polypeptide: UPF0173 metal-dependent hydrolase MXAN_1394 (279 aa).

Belongs to the UPF0173 family.

This is UPF0173 metal-dependent hydrolase MXAN_1394 from Myxococcus xanthus (strain DK1622).